A 68-amino-acid polypeptide reads, in one-letter code: Amphipathic peptide VmCT1 (68 aa).

A signal peptide spans 1-23; that stretch reads MKTQFVILIVAVVLLQLISHSEA. Position 36 is a phenylalanine amide (phenylalanine 36). Residues 40-68 constitute a propeptide that is removed on maturation; the sequence is GLRNFDDLDDTFEPEMSEADLKYLQDLLR.

The protein belongs to the non-disulfide-bridged peptide (NDBP) superfamily. Short antimicrobial peptide (group 4) family. In terms of tissue distribution, expressed by the venom gland.

Its subcellular location is the secreted. It is found in the target cell membrane. Functionally, cationic amphipathic peptide with antibacterial activities against both Gram-positive and Gram-negative bacteria. Also shows antifungal activities. Is mildly hemolytic against human erythrocytes. In addition, when tested in vitro on the parasite Trypanosoma cruzi (responsible of the Chagas disease), is able to reduce the number of the three forms (epimastigote, trypomastigote and amastigote). Also shows antiplasmodial and cytotoxic activity (tested on Plasmodium gallinaceum, and MCF-7 breast cancer cell line). The protein is Amphipathic peptide VmCT1 of Vaejovis mexicanus smithi (Mexican scorpion).